Reading from the N-terminus, the 550-residue chain is Putative golgin subfamily A member 6-like protein 19 (550 aa).

Residues 1-11 show a composition bias toward pro residues; that stretch reads MWPQPRLPPHP. Positions 1–77 are disordered; the sequence is MWPQPRLPPH…DSATGVYGEG (77 aa). Positions 51 to 62 are enriched in polar residues; it reads NGSSPDTATSGG. Residues 157 to 405 adopt a coiled-coil conformation; it reads SKVEQLQDET…QERLRQQDER (249 aa). The span at 467-480 shows a compositional bias: basic and acidic residues; sequence KELEKSGGAEEPRG. The disordered stretch occupies residues 467–529; sequence KELEKSGGAE…VGTGEAAGGA (63 aa). Composition is skewed to low complexity over residues 484–499 and 517–529; these read AAAA…PQGA and GEAV…AGGA.

It belongs to the GOLGA6 family.

In Homo sapiens (Human), this protein is Putative golgin subfamily A member 6-like protein 19 (GOLGA6L19).